We begin with the raw amino-acid sequence, 341 residues long: DNA-directed RNA polymerase subunit alpha (341 aa).

Residues methionine 1–glutamate 237 form an alpha N-terminal domain (alpha-NTD) region. The alpha C-terminal domain (alpha-CTD) stretch occupies residues phenylalanine 252–asparagine 341.

The protein belongs to the RNA polymerase alpha chain family. Homodimer. The RNAP catalytic core consists of 2 alpha, 1 beta, 1 beta' and 1 omega subunit. When a sigma factor is associated with the core the holoenzyme is formed, which can initiate transcription.

The catalysed reaction is RNA(n) + a ribonucleoside 5'-triphosphate = RNA(n+1) + diphosphate. DNA-dependent RNA polymerase catalyzes the transcription of DNA into RNA using the four ribonucleoside triphosphates as substrates. This chain is DNA-directed RNA polymerase subunit alpha, found in Rickettsia bellii (strain OSU 85-389).